An 800-amino-acid chain; its full sequence is Phenylalanine--tRNA ligase beta subunit (800 aa).

Residues 39 to 152 (AAGLSKIVVG…EDAVPGEEVF (114 aa)) enclose the tRNA-binding domain. Residues 405–480 (TSDVEVSSTL…RIYGYDRLPT (76 aa)) enclose the B5 domain. Mg(2+) contacts are provided by D458, D464, E467, and E468. Residues 707–800 (TKFPAVSRDV…LEEKVNAEVR (94 aa)) form the FDX-ACB domain.

Belongs to the phenylalanyl-tRNA synthetase beta subunit family. Type 1 subfamily. In terms of assembly, tetramer of two alpha and two beta subunits. It depends on Mg(2+) as a cofactor.

The protein localises to the cytoplasm. It catalyses the reaction tRNA(Phe) + L-phenylalanine + ATP = L-phenylalanyl-tRNA(Phe) + AMP + diphosphate + H(+). This Streptococcus pneumoniae (strain ATCC BAA-255 / R6) protein is Phenylalanine--tRNA ligase beta subunit.